A 348-amino-acid chain; its full sequence is D-lactate dehydrogenase kk1H (348 aa).

NAD(+)-binding positions include Arg-158–Ile-159, Asp-178, Cys-208–Pro-209, Thr-235–Arg-237, and Asp-261. Arg-237 is an active-site residue. Glu-266 is a catalytic residue. His-298 acts as the Proton donor in catalysis.

The protein belongs to the D-isomer specific 2-hydroxyacid dehydrogenase family.

The protein operates within secondary metabolite biosynthesis. In terms of biological role, D-lactate dehydrogenase; part of the gene cluster that mediates the biosynthesis of KK-1, a novel cyclic depsipeptide with 10 residues which is a promising active compound with high activity against many plant pathogens, especially Botrytis cinerea. Within the pathway, kk1H catalyzes in the synthesis of D-lactic acid from pyruvic acid, which is recognized by the A domain of the first kk1B module. The nonribosomal peptide synthetase (NRPS) kk1B catalyzes the elongation and cyclization of the decapeptide chain composed of 1 D-lactic acid residue (D-Lac), 1 pipecolic acid residue (Pip), 1 aspartic acid residue (Asp), 1 isoleucine residue (Ile), 1 glycine residue (Gly), 1 tyrosine residue (Tyr) and 4 valine residues (Val). The Asp, Ile and 3 Val residues are N-methylated by the 5 methyltransferase domains from the NRPS (found in modules 3, 5, 6, 7 and 9), whereas the Tyr residue is O-methylated by the cluster encoded O-methyltransferase kk1A. The thioesterase kk1J is likely to be involved in the corrective mechanism of peptide chain synthesis. The D-lactate dehydrogenase kk1H is involved in the synthesis of D-lactic acid from pyruvic acid, which is recognized by the A domain of the first kk1B module. The pyrroline-5-carboxylate reductase kk1I is involved in the synthesis of the L-pipecolic acid residue of KK-1 from delta-1-pyrroline-5-carboxylate (P5C), a metabolic intermediate of lysine. It still is unclear how kk1C and kk1D are involved in the production of KK-1. This Curvularia clavata protein is D-lactate dehydrogenase kk1H.